Consider the following 75-residue polypeptide: MKGKIPKIRNQANKVKRTPRYMEFPVTYEVYHVESGDTLWTIAKSFEIPVQQLMNLNKLSSDRIYPGQIIKIRER.

The LysM domain occupies 29 to 72; it reads EVYHVESGDTLWTIAKSFEIPVQQLMNLNKLSSDRIYPGQIIKI.

This is an uncharacterized protein from Bacillus subtilis (strain 168).